Here is a 525-residue protein sequence, read N- to C-terminus: C6 finger transcription factor fsqA (525 aa).

Positions 12–53 form a DNA-binding region, zn(2)-C6 fungal-type; that stretch reads CDRCRGQKLRCVGAGKPIPNSSSRLLRNEIPCDRCRRAKVEC. Disordered regions lie at residues 80-142, 204-260, and 327-371; these read RSSS…LGDM, EWNS…EPAG, and RARS…ARSS. Residues 95 to 115 are compositionally biased toward polar residues; sequence PPNSLVTAASKPHPNSLSFNH. The segment covering 327–337 has biased composition (polar residues); that stretch reads RARSQWSSLPE.

The protein localises to the nucleus. In terms of biological role, transcription factor that regulates the expression of the gene cluster that mediates the biosynthesis of the isoquinoline alkaloids fumisoquin A, fumisoquin B and fumisoquin C; as well as small amounts of fumipyrrole as a shunt metabolite. The products of the cluster lead to a brown coloration and are important for growth and conidiation. This is C6 finger transcription factor fsqA from Aspergillus fumigatus (strain ATCC MYA-4609 / CBS 101355 / FGSC A1100 / Af293) (Neosartorya fumigata).